Here is a 113-residue protein sequence, read N- to C-terminus: Colicin-E1* immunity protein (113 aa).

Its function is as follows. This protein is able to protect a cell, which harbors the plasmid pKY-1 encoding colicin E1*, against colicin E1*. This is Colicin-E1* immunity protein (imm) from Shigella sonnei.